The primary structure comprises 397 residues: Argininosuccinate synthase (397 aa).

7-15 (LYSGGLDTS) contributes to the ATP binding site. Residue Tyr-83 coordinates L-citrulline. Residue Gly-113 participates in ATP binding. Thr-115, Asn-119, and Asp-120 together coordinate L-aspartate. Asn-119 is an L-citrulline binding site. Arg-123, Ser-169, Ser-178, Glu-253, and Tyr-265 together coordinate L-citrulline.

This sequence belongs to the argininosuccinate synthase family. Type 1 subfamily. As to quaternary structure, homotetramer.

It localises to the cytoplasm. The enzyme catalyses L-citrulline + L-aspartate + ATP = 2-(N(omega)-L-arginino)succinate + AMP + diphosphate + H(+). The protein operates within amino-acid biosynthesis; L-arginine biosynthesis; L-arginine from L-ornithine and carbamoyl phosphate: step 2/3. The sequence is that of Argininosuccinate synthase from Thermoplasma volcanium (strain ATCC 51530 / DSM 4299 / JCM 9571 / NBRC 15438 / GSS1).